The chain runs to 254 residues: 2-dehydro-3-deoxy-D-gluconate 5-dehydrogenase (254 aa).

Residue 16 to 40 (LVTGPGTGIGQGIAKALAGAGADII) coordinates NAD(+). Serine 146 is a substrate binding site. Tyrosine 159 acts as the Proton acceptor in catalysis.

This sequence belongs to the short-chain dehydrogenases/reductases (SDR) family.

It carries out the reaction 2-dehydro-3-deoxy-D-gluconate + NAD(+) = 3-deoxy-D-glycero-2,5-hexodiulosonate + NADH + H(+). It participates in glycan metabolism; pectin degradation; 2-dehydro-3-deoxy-D-gluconate from pectin: step 5/5. Its function is as follows. Catalyzes the reduction of 2,5-diketo-3-deoxygluconate (DKII or 4,6-dihydroxy-2,5-dioxohexanoate) into 2-keto-3-deoxygluconate (KDG or 2-dehydro-3-deoxygluconate) with a concomitant oxidation of NADH. The protein is 2-dehydro-3-deoxy-D-gluconate 5-dehydrogenase (kduD) of Bacillus subtilis (strain 168).